The primary structure comprises 169 residues: MILGLALIPSKSFQEAVDSYRKRYDKQYSRIKPHVTIKAPFEIKDGDLDSVIEQVRARINGIPAVEVHATKASSFKPTNNVIYFKVAKTDDLEELFNRFNGEDFYGEAEHVFVPHFTIAQGLSSQEFEDIFGQVALAGVDHKEIIDELTLLRFDDDEDKWKVIETFKLA.

Histidine 34 (proton donor) is an active-site residue. 2 short sequence motifs (HXTX) span residues 34–37 (HVTI) and 115–118 (HFTI). The active-site Proton acceptor is histidine 115.

The protein belongs to the 2H phosphoesterase superfamily. YjcG family.

The protein is Putative phosphoesterase SACOL1020 of Staphylococcus aureus (strain COL).